Consider the following 421-residue polypeptide: Gamma-glutamyl phosphate reductase (421 aa).

Belongs to the gamma-glutamyl phosphate reductase family.

Its subcellular location is the cytoplasm. It carries out the reaction L-glutamate 5-semialdehyde + phosphate + NADP(+) = L-glutamyl 5-phosphate + NADPH + H(+). It functions in the pathway amino-acid biosynthesis; L-proline biosynthesis; L-glutamate 5-semialdehyde from L-glutamate: step 2/2. Catalyzes the NADPH-dependent reduction of L-glutamate 5-phosphate into L-glutamate 5-semialdehyde and phosphate. The product spontaneously undergoes cyclization to form 1-pyrroline-5-carboxylate. This is Gamma-glutamyl phosphate reductase from Acinetobacter baumannii (strain AYE).